The sequence spans 1171 residues: ATP-dependent helicase/deoxyribonuclease subunit B (1171 aa).

The 390-residue stretch at 1 to 390 (MSLRFVIGRA…HPLVECIRSA (390 aa)) folds into the UvrD-like helicase ATP-binding domain. 8 to 15 (GRAGSGKS) contacts ATP. The UvrD-like helicase C-terminal domain occupies 281–587 (MEQPRFHSPA…QFANIPPSLD (307 aa)). Cys-805, Cys-1129, Cys-1132, and Cys-1138 together coordinate [4Fe-4S] cluster.

The protein belongs to the helicase family. AddB/RexB type 1 subfamily. As to quaternary structure, heterodimer of AddA and AddB. It depends on Mg(2+) as a cofactor. The cofactor is [4Fe-4S] cluster.

Functionally, the heterodimer acts as both an ATP-dependent DNA helicase and an ATP-dependent, dual-direction single-stranded exonuclease. Recognizes the chi site generating a DNA molecule suitable for the initiation of homologous recombination. The AddB subunit has 5' -&gt; 3' nuclease activity but not helicase activity. The sequence is that of ATP-dependent helicase/deoxyribonuclease subunit B from Bacillus cereus (strain ATCC 10987 / NRS 248).